The sequence spans 415 residues: Adenylosuccinate synthetase (415 aa).

GTP is bound by residues Gly12 to Lys18 and Gly40 to Thr42. The Proton acceptor role is filled by Asp13. Mg(2+) contacts are provided by Asp13 and Gly40. IMP contacts are provided by residues Asp13 to Lys16, Asn38 to His41, Thr125, Arg139, Gln219, Thr234, and Arg298. Catalysis depends on His41, which acts as the Proton donor. Thr294–Arg300 is a substrate binding site. GTP-binding positions include Arg300, Lys326–Asp328, and Ser404–Gly406.

Belongs to the adenylosuccinate synthetase family. As to quaternary structure, homodimer. Mg(2+) serves as cofactor.

It is found in the cytoplasm. It carries out the reaction IMP + L-aspartate + GTP = N(6)-(1,2-dicarboxyethyl)-AMP + GDP + phosphate + 2 H(+). It participates in purine metabolism; AMP biosynthesis via de novo pathway; AMP from IMP: step 1/2. Its function is as follows. Plays an important role in the de novo pathway of purine nucleotide biosynthesis. Catalyzes the first committed step in the biosynthesis of AMP from IMP. This is Adenylosuccinate synthetase from Wolinella succinogenes (strain ATCC 29543 / DSM 1740 / CCUG 13145 / JCM 31913 / LMG 7466 / NCTC 11488 / FDC 602W) (Vibrio succinogenes).